The chain runs to 220 residues: Charged multivesicular body protein 3 (220 aa).

The N-myristoyl glycine moiety is linked to residue Gly2. The stretch at 22-54 (KIRKEMRVIDRQIRDIQREQEKVKRSIKESAKK) forms a coiled coil. Positions 168-169 (IL) are important for autoinhibitory function. The segment at 181–220 (PSKVTDALPEPEITGAMAASDEEEEEDLEAMHSRLAALRS) is disordered. Positions 201 to 209 (DEEEEEDLE) match the MIT-interacting motif motif. 2 interaction with STAMBP regions span residues 203–207 (EEEED) and 219–220 (RS).

This sequence belongs to the SNF7 family. In terms of assembly, probable core component of the endosomal sorting required for transport complex III (ESCRT-III). ESCRT-III components are thought to multimerize to form a flat lattice on the perimeter membrane of the endosome. Several assembly forms of ESCRT-III may exist that interact and act sequentially.

It is found in the cytoplasm. It localises to the cytosol. The protein localises to the membrane. Its subcellular location is the endosome. The protein resides in the late endosome membrane. Functionally, probable core component of the endosomal sorting required for transport complex III (ESCRT-III) which is involved in multivesicular bodies (MVBs) formation and sorting of endosomal cargo proteins into MVBs. MVBs contain intraluminal vesicles (ILVs) that are generated by invagination and scission from the limiting membrane of the endosome and mostly are delivered to lysosomes enabling degradation of membrane proteins, such as stimulated growth factor receptors, lysosomal enzymes and lipids. Involved in late stages of cytokinesis. Plays a role in endosomal sorting/trafficking of EGF receptor. This Xenopus laevis (African clawed frog) protein is Charged multivesicular body protein 3 (chmp3).